The primary structure comprises 586 residues: Arginine--tRNA ligase (586 aa).

A 'HIGH' region motif is present at residues 128–138 (ANPTGPLHVGH).

It belongs to the class-I aminoacyl-tRNA synthetase family. Monomer.

The protein localises to the cytoplasm. It carries out the reaction tRNA(Arg) + L-arginine + ATP = L-arginyl-tRNA(Arg) + AMP + diphosphate. The sequence is that of Arginine--tRNA ligase from Legionella pneumophila (strain Corby).